Here is a 424-residue protein sequence, read N- to C-terminus: Serine/threonine-protein kinase H1 (424 aa).

The N-myristoyl glycine moiety is linked to residue glycine 2. A lipid anchor (S-palmitoyl cysteine) is attached at cysteine 3. The interval 56-80 (SQYAHPCPGPPTAGHTEPPSEPPRR) is disordered. Residues 98–355 (YDIKALIGRG…ALQALRHPWV (258 aa)) form the Protein kinase domain. ATP contacts are provided by residues 104–112 (IGRGSFSRV) and lysine 127. The Proton acceptor role is filled by aspartate 218. Residues 378–407 (RASSRCQSTKSAQSTRSSRSTRSNKSRRVR) form a disordered region. Phosphoserine; by autocatalysis occurs at positions 380 and 381. Residues 385-398 (STKSAQSTRSSRST) are compositionally biased toward low complexity.

This sequence belongs to the protein kinase superfamily. CAMK Ser/Thr protein kinase family. In terms of assembly, homodimer. In terms of processing, autophosphorylated on serine residues. Myristoylated. Required for membrane association. Prerequisite for palmitoylation to occur. Post-translationally, palmitoylated. Expressed in all tissues and cell lines tested with the highest level of abundance in testis.

The protein resides in the golgi apparatus. It is found in the cytoplasm. Its subcellular location is the cytoskeleton. The protein localises to the microtubule organizing center. It localises to the centrosome. The protein resides in the nucleus speckle. It is found in the endoplasmic reticulum membrane. Its subcellular location is the cell membrane. It catalyses the reaction L-seryl-[protein] + ATP = O-phospho-L-seryl-[protein] + ADP + H(+). The catalysed reaction is L-threonyl-[protein] + ATP = O-phospho-L-threonyl-[protein] + ADP + H(+). Activity depends on Ca(2+) concentration. Its function is as follows. Serine/threonine protein kinase that may be involved in the regulation of pre-mRNA processing. It may phosphorylate components of nuclear splice factor compartments (SFC), such as non-snRNP splicing factors containing a serine/arginine-rich domain (SR proteins). Reversible phosphorylation of SR proteins may cause their release into the nucleoplasm and change their local concentration, thereby influencing alternative splicing. This chain is Serine/threonine-protein kinase H1 (PSKH1), found in Homo sapiens (Human).